The chain runs to 152 residues: MAPKAEKKPAAKKPAEEEPAAEKAEKTPAGKKPKAEKRLPAGKSAAKEGGDKKGKKKAKKSVETYKIYIFKVLKQVHPDIGISSKAMSIMNSFINDIFEKLAGEAAKLARYNKKPTITSREIQTSVRLVLPGELAKHAVSEGTKAVTKFTSS.

Over residues 1–28 (MAPKAEKKPAAKKPAEEEPAAEKAEKTP) the composition is skewed to basic and acidic residues. The segment at 1-60 (MAPKAEKKPAAKKPAEEEPAAEKAEKTPAGKKPKAEKRLPAGKSAAKEGGDKKGKKKAKK) is disordered. 2 positions are modified to N6-acetyllysine: Lys-7 and Lys-37. Lys-148 participates in a covalent cross-link: Glycyl lysine isopeptide (Lys-Gly) (interchain with G-Cter in ubiquitin).

The protein belongs to the histone H2B family. The nucleosome is a histone octamer containing two molecules each of H2A, H2B, H3 and H4 assembled in one H3-H4 heterotetramer and two H2A-H2B heterodimers. The octamer wraps approximately 147 bp of DNA. In terms of processing, can be acetylated to form H2BK6ac and H2BK33ac. Post-translationally, monoubiquitinated to form H2BK143ub1; may give a specific tag for epigenetic transcriptional activation.

The protein resides in the nucleus. Its subcellular location is the chromosome. Functionally, core component of nucleosome. Nucleosomes wrap and compact DNA into chromatin, limiting DNA accessibility to the cellular machineries which require DNA as a template. Histones thereby play a central role in transcription regulation, DNA repair, DNA replication and chromosomal stability. DNA accessibility is regulated via a complex set of post-translational modifications of histones, also called histone code, and nucleosome remodeling. In Triticum aestivum (Wheat), this protein is Histone H2B.1.